Consider the following 132-residue polypeptide: Protein MrkF (132 aa).

Its subcellular location is the fimbrium. Its function is as follows. Appears to affect the stability of the intact fimbriae on the cell surface. This is Protein MrkF (mrkF) from Klebsiella pneumoniae.